We begin with the raw amino-acid sequence, 571 residues long: Probable pectinesterase/pectinesterase inhibitor 58 (571 aa).

The signal sequence occupies residues 1-28 (MGVDGELKKKKCIIAGVITALLVLMVVA). N-linked (GlcNAc...) asparagine glycosylation is found at Asn36, Asn91, Asn207, and Asn216. The segment at 49-204 (KTATTAVEAV…RELTSNGLAM (156 aa)) is pectinesterase inhibitor 58. Residues 259 to 556 (NVVVAHDGSG…FTPARFLRGN (298 aa)) form a pectinesterase 58 region. Thr335 provides a ligand contact to substrate. N-linked (GlcNAc...) asparagine glycosylation is present at Asn347. Gln365 provides a ligand contact to substrate. Asp388 serves as the catalytic Proton donor; for pectinesterase activity. Cys402 and Cys422 are disulfide-bonded. The active-site Nucleophile; for pectinesterase activity is Asp409. The substrate site is built by Arg477 and Trp479.

It in the N-terminal section; belongs to the PMEI family. In the C-terminal section; belongs to the pectinesterase family. As to expression, expressed in siliques, but not in flower buds.

The protein localises to the secreted. Its subcellular location is the cell wall. It carries out the reaction [(1-&gt;4)-alpha-D-galacturonosyl methyl ester](n) + n H2O = [(1-&gt;4)-alpha-D-galacturonosyl](n) + n methanol + n H(+). The protein operates within glycan metabolism; pectin degradation; 2-dehydro-3-deoxy-D-gluconate from pectin: step 1/5. Its function is as follows. Acts in the modification of cell walls via demethylesterification of cell wall pectin. In Arabidopsis thaliana (Mouse-ear cress), this protein is Probable pectinesterase/pectinesterase inhibitor 58 (PME58).